The sequence spans 342 residues: uncharacterized protein (342 aa).

3 helical membrane-spanning segments follow: residues 35-55, 134-154, and 161-180; these read YFRV…WCFS, LLFL…IIYF, and LFIT…YCFS. Disordered stretches follow at residues 198–220 and 311–342; these read SSDN…QQYN and IINN…NYTN.

The protein localises to the membrane. This is an uncharacterized protein from Dictyostelium discoideum (Social amoeba).